A 452-amino-acid polypeptide reads, in one-letter code: Glycine receptor subunit alpha-2 (452 aa).

The N-terminal stretch at 1 to 27 is a signal peptide; it reads MNRQLVNILTALFAFFLETNHFRTAFC. At 28–256 the chain is on the extracellular side; sequence KDHDSRSGKQ…KFHLERQMGY (229 aa). An N-linked (GlcNAc...) asparagine glycan is attached at Asn72. Arg99 is a glycine binding site. Arg99 is a binding site for strychnine. The N-linked (GlcNAc...) asparagine glycan is linked to Asn103. Ser163 is a glycine binding site. Cys172 and Cys186 are oxidised to a cystine. Zn(2+)-binding residues include Glu226 and Glu228. Cysteines 232 and 243 form a disulfide. Thr238 is a binding site for glycine. His249 is a binding site for Zn(2+). A helical membrane pass occupies residues 257 to 278; sequence YLIQMYIPSLLIVILSWVSFWI. The Cytoplasmic portion of the chain corresponds to 279–283; the sequence is NMDAA. Residues 284-304 form a helical membrane-spanning segment; the sequence is PARVALGITTVLTMTTQSSGS. At 305-315 the chain is on the extracellular side; that stretch reads RASLPKVSYVK. The chain crosses the membrane as a helical span at residues 316-336; it reads AIDIWMAVCLLFVFAALLEYA. Topologically, residues 337 to 420 are cytoplasmic; it reads AVNFVSRQHK…FVDRAKRIDT (84 aa). The chain crosses the membrane as a helical span at residues 421–441; that stretch reads ISRAAFPLAFLIFNIFYWITY. Residues 442-452 lie on the Extracellular side of the membrane; sequence KIIRHEDVHKK.

The protein belongs to the ligand-gated ion channel (TC 1.A.9) family. Glycine receptor (TC 1.A.9.3) subfamily. GLRA2 sub-subfamily. In terms of assembly, interacts with GLRB. Heteropentamer composed of GLRA2 and GLRB. Functional GLRB-GLRA2 heteropentamers contain four GLRA2 subunits and one GLRB subunit, although alternative subunit composition cannot be excluded. Homopentamer (in vitro). Both homopentamers and heteropentamers form functional ion channels, but their characteristics are subtly different.

It localises to the postsynaptic cell membrane. The protein localises to the synapse. Its subcellular location is the cell membrane. The protein resides in the cell projection. The enzyme catalyses chloride(in) = chloride(out). With respect to regulation, channel opening is triggered by extracellular glycine. Channel opening is also triggered by taurine and beta-alanine. Inhibited by strychnine. Inhibited by picrotoxin. Channel activity is potentiated by 10-100 uM Zn(2+). Channel activity is marginally increased by 50 mM ethanol; it is strongly increased by a combination of 0.5 uM Zn(2+) and 50 mM ethanol. Channel activity is inhibited by 100-1000 uM Zn(2+). Its function is as follows. Subunit of heteromeric glycine-gated chloride channels. Plays a role in synaptic plasticity. Contributes to the generation of inhibitory postsynaptic currents, and is involved in the down-regulation of neuronal excitability. Plays a role in cellular responses to ethanol. The polypeptide is Glycine receptor subunit alpha-2 (Homo sapiens (Human)).